A 108-amino-acid chain; its full sequence is UPF0060 membrane protein CC_1976 (108 aa).

Transmembrane regions (helical) follow at residues 4-24, 27-47, 59-79, and 85-105; these read FAIYVLAALAEIAGCFGFWAW, LGKSPAWAVLGVLSLVIFALL, AFAAYGGVYIIASLAWMQVVE, and RWDLIGGVICLAGAALILFGP.

It belongs to the UPF0060 family.

Its subcellular location is the cell inner membrane. In Caulobacter vibrioides (strain ATCC 19089 / CIP 103742 / CB 15) (Caulobacter crescentus), this protein is UPF0060 membrane protein CC_1976.